A 692-amino-acid chain; its full sequence is Polyribonucleotide nucleotidyltransferase (692 aa).

Aspartate 484 and aspartate 490 together coordinate Mg(2+). In terms of domain architecture, KH spans 551–614 (PKYFIHKISQ…ALVERVKSIT (64 aa)). An S1 motif domain is found at 620-688 (GAVYTGKVKT…NRGRIRLSRK (69 aa)).

The protein belongs to the polyribonucleotide nucleotidyltransferase family. Requires Mg(2+) as cofactor.

It is found in the cytoplasm. The enzyme catalyses RNA(n+1) + phosphate = RNA(n) + a ribonucleoside 5'-diphosphate. Involved in mRNA degradation. Catalyzes the phosphorolysis of single-stranded polyribonucleotides processively in the 3'- to 5'-direction. The polypeptide is Polyribonucleotide nucleotidyltransferase (Desulfotalea psychrophila (strain LSv54 / DSM 12343)).